The following is a 133-amino-acid chain: Large ribosomal subunit protein uL22 (133 aa).

This sequence belongs to the universal ribosomal protein uL22 family. Part of the 50S ribosomal subunit.

Functionally, this protein binds specifically to 23S rRNA; its binding is stimulated by other ribosomal proteins, e.g. L4, L17, and L20. It is important during the early stages of 50S assembly. It makes multiple contacts with different domains of the 23S rRNA in the assembled 50S subunit and ribosome. The globular domain of the protein is located near the polypeptide exit tunnel on the outside of the subunit, while an extended beta-hairpin is found that lines the wall of the exit tunnel in the center of the 70S ribosome. This Borrelia garinii subsp. bavariensis (strain ATCC BAA-2496 / DSM 23469 / PBi) (Borreliella bavariensis) protein is Large ribosomal subunit protein uL22.